We begin with the raw amino-acid sequence, 389 residues long: Succinate--CoA ligase [ADP-forming] subunit beta (389 aa).

Positions 9-244 (KQLLAEYGIP…KTQEDPTEVI (236 aa)) constitute an ATP-grasp domain. ATP contacts are provided by residues lysine 46, 53-55 (GRG), glycine 102, and glutamate 107. Residues asparagine 199 and aspartate 213 each coordinate Mg(2+). Substrate is bound by residues asparagine 264 and 321–323 (GIV).

The protein belongs to the succinate/malate CoA ligase beta subunit family. Heterotetramer of two alpha and two beta subunits. It depends on Mg(2+) as a cofactor.

It carries out the reaction succinate + ATP + CoA = succinyl-CoA + ADP + phosphate. The catalysed reaction is GTP + succinate + CoA = succinyl-CoA + GDP + phosphate. It participates in carbohydrate metabolism; tricarboxylic acid cycle; succinate from succinyl-CoA (ligase route): step 1/1. In terms of biological role, succinyl-CoA synthetase functions in the citric acid cycle (TCA), coupling the hydrolysis of succinyl-CoA to the synthesis of either ATP or GTP and thus represents the only step of substrate-level phosphorylation in the TCA. The beta subunit provides nucleotide specificity of the enzyme and binds the substrate succinate, while the binding sites for coenzyme A and phosphate are found in the alpha subunit. The polypeptide is Succinate--CoA ligase [ADP-forming] subunit beta (Stenotrophomonas maltophilia (strain R551-3)).